The chain runs to 415 residues: Serine hydroxymethyltransferase (415 aa).

(6S)-5,6,7,8-tetrahydrofolate-binding positions include Leu122 and 126-128 (GHL). Lys230 carries the N6-(pyridoxal phosphate)lysine modification.

The protein belongs to the SHMT family. As to quaternary structure, homodimer. The cofactor is pyridoxal 5'-phosphate.

The protein resides in the cytoplasm. The enzyme catalyses (6R)-5,10-methylene-5,6,7,8-tetrahydrofolate + glycine + H2O = (6S)-5,6,7,8-tetrahydrofolate + L-serine. It participates in one-carbon metabolism; tetrahydrofolate interconversion. The protein operates within amino-acid biosynthesis; glycine biosynthesis; glycine from L-serine: step 1/1. Functionally, catalyzes the reversible interconversion of serine and glycine with tetrahydrofolate (THF) serving as the one-carbon carrier. This reaction serves as the major source of one-carbon groups required for the biosynthesis of purines, thymidylate, methionine, and other important biomolecules. Also exhibits THF-independent aldolase activity toward beta-hydroxyamino acids, producing glycine and aldehydes, via a retro-aldol mechanism. The polypeptide is Serine hydroxymethyltransferase (Cupriavidus taiwanensis (strain DSM 17343 / BCRC 17206 / CCUG 44338 / CIP 107171 / LMG 19424 / R1) (Ralstonia taiwanensis (strain LMG 19424))).